The following is a 326-amino-acid chain: Flavanone 3-dioxygenase 3 (326 aa).

Residues 1–15 (MSDTSKGIPQEQLPS) are compositionally biased toward polar residues. A disordered region spans residues 1–21 (MSDTSKGIPQEQLPSQELHPP). The 102-residue stretch at 175–276 (EGLQLLSVNC…RISLASIHGF (102 aa)) folds into the Fe2OG dioxygenase domain. Residues histidine 200, aspartate 202, and histidine 257 each coordinate Fe cation. Arginine 267 is a binding site for 2-oxoglutarate.

It belongs to the iron/ascorbate-dependent oxidoreductase family. It depends on Fe(2+) as a cofactor. Requires L-ascorbate as cofactor. In terms of tissue distribution, expressed at very low levels in roots, leaves, stems and seeds.

The enzyme catalyses a (2S)-flavan-4-one + 2-oxoglutarate + O2 = a (2R,3R)-dihydroflavonol + succinate + CO2. Its pathway is secondary metabolite biosynthesis; flavonoid biosynthesis. Functionally, catalyzes the 3-beta-hydroxylation of 2S-flavanones to 2R,3R-dihydroflavonols which are intermediates in the biosynthesis of flavonols, anthocyanidins, catechins and proanthocyanidins in plants. Converts (2S)-eriodictyol to (+)-taxifolin and (2S)-naringenin to (+)-(2R/3R)-dihydrokaempferol in vitro. The chain is Flavanone 3-dioxygenase 3 from Oryza sativa subsp. japonica (Rice).